The sequence spans 569 residues: MPYRISRQAYAETYGPTTGDRLRLADTELILEVEKDFTVYGDEVKFGGGKVIRDGMGQSQTPRAGGAVDTVITNALILDWWGIVKADVGLKDGRIVGIGKAGNPDTQAGVTIVVGPGTEAIAGEGHILTAGGIDTHIHFICPQQIETALASGMTTLMGGGTGPATGTNATTCTPGAFHIGRMLQAAEGLPVNLGFFGKGNASTPEALEEQVRAGACGLKLHEDWGTTPATIDACLSVADRMDVQVCIHTDTLNEAGFVEDTIAAIKGRTIHTFHTEGAGGGHAPDIIKICGEANVLPSSTNPTRPYTRNTLEEHLDMLMVCHHLDPRIPEDVAFAESRIRRETIAAEDILHDLGAFSIIASDSQAMGRVGEVITRTFQTAHKMKVQRGALPQDSSRNDNHRLKRYIAKVTINPALAHGISSEVGSIETGKLADLVLWKPGFFGIRPEVVIKGGSIVWAQMGDANASIPTPGPVHGRPMFGAFGKALAPSCLTFVSEAAMDSDIQRHLGLERTCMAVKDTRSVGKSALKLNSALPKVSVDPQTYEVFADGELLTCEPAEVLPLAQRYLLL.

In terms of domain architecture, Urease spans 131-569; the sequence is GGIDTHIHFI…LPLAQRYLLL (439 aa). Positions 136, 138, and 219 each coordinate Ni(2+). K219 is subject to N6-carboxylysine. H221 is a binding site for substrate. Residues H248 and H274 each contribute to the Ni(2+) site. The Proton donor role is filled by H322. D362 lines the Ni(2+) pocket.

The protein belongs to the metallo-dependent hydrolases superfamily. Urease alpha subunit family. As to quaternary structure, heterotrimer of UreA (gamma), UreB (beta) and UreC (alpha) subunits. Three heterotrimers associate to form the active enzyme. Ni cation serves as cofactor. Carboxylation allows a single lysine to coordinate two nickel ions.

It localises to the cytoplasm. The enzyme catalyses urea + 2 H2O + H(+) = hydrogencarbonate + 2 NH4(+). It functions in the pathway nitrogen metabolism; urea degradation; CO(2) and NH(3) from urea (urease route): step 1/1. This is Urease subunit alpha from Synechococcus sp. (strain WH7805).